A 247-amino-acid polypeptide reads, in one-letter code: Carboxy-S-adenosyl-L-methionine synthase (247 aa).

S-adenosyl-L-methionine contacts are provided by residues Tyr-39, 64 to 66 (GCS), 89 to 90 (DN), 117 to 118 (DI), Asn-132, and Arg-199.

This sequence belongs to the class I-like SAM-binding methyltransferase superfamily. Cx-SAM synthase family. Homodimer.

It catalyses the reaction prephenate + S-adenosyl-L-methionine = carboxy-S-adenosyl-L-methionine + 3-phenylpyruvate + H2O. In terms of biological role, catalyzes the conversion of S-adenosyl-L-methionine (SAM) to carboxy-S-adenosyl-L-methionine (Cx-SAM). The polypeptide is Carboxy-S-adenosyl-L-methionine synthase (Klebsiella pneumoniae subsp. pneumoniae (strain ATCC 700721 / MGH 78578)).